Consider the following 426-residue polypeptide: UPF0597 protein CLI_1810 (426 aa).

The protein belongs to the UPF0597 family.

In Clostridium botulinum (strain Langeland / NCTC 10281 / Type F), this protein is UPF0597 protein CLI_1810.